Reading from the N-terminus, the 495-residue chain is Ubiquinone biosynthesis monooxygenase COQ6, mitochondrial (495 aa).

It belongs to the UbiH/COQ6 family. Component of a multi-subunit COQ enzyme complex. FAD serves as cofactor.

The protein localises to the mitochondrion inner membrane. It catalyses the reaction a 4-hydroxy-3-(all-trans-polyprenyl)benzoate + 2 reduced [2Fe-2S]-[ferredoxin] + O2 + 2 H(+) = a 3,4-dihydroxy-5-(all-trans-polyprenyl)benzoate + 2 oxidized [2Fe-2S]-[ferredoxin] + H2O. The catalysed reaction is a 2-methoxy-6-(all-trans-polyprenyl)phenol + 2 reduced [2Fe-2S]-[ferredoxin] + O2 + 2 H(+) = a 2-methoxy-6-(all-trans-polyprenyl)benzene-1,4-diol + 2 oxidized [2Fe-2S]-[ferredoxin] + H2O. The protein operates within cofactor biosynthesis; ubiquinone biosynthesis. Functionally, FAD-dependent monooxygenase required for two non-consecutive steps during ubiquinone biosynthesis. Required for the C5-ring hydroxylation during ubiquinone biosynthesis by catalyzing the hydroxylation of 4-hydroxy-3-(all-trans-polyprenyl)benzoic acid to 3,4-dihydroxy-5-(all-trans-polyprenyl)benzoic acid. Also acts downstream of coq4, for the C1-hydroxylation during ubiquinone biosynthesis by catalyzing the hydroxylation of 2-methoxy-6-(all-trans-polyprenyl)phenol to 2-methoxy-6-(all-trans-polyprenyl)benzene-1,4-diol. The electrons required for the hydroxylation reaction are funneled indirectly to coq6 from NADPH via a ferredoxin/ferredoxin reductase system. The protein is Ubiquinone biosynthesis monooxygenase COQ6, mitochondrial of Dictyostelium discoideum (Social amoeba).